The following is a 1546-amino-acid chain: Mediator of RNA polymerase II transcription subunit 14 (1546 aa).

2 consecutive short sequence motifs (LXXLL motif) follow at residues 51–55 (LAELL) and 468–472 (LPSLL). Disordered regions lie at residues 692-717 (KSAT…PSGS), 1000-1193 (GRAP…NRPW), and 1512-1546 (NPMM…GGPQ). Composition is skewed to low complexity over residues 693–717 (SATA…PSGS), 1020–1035 (GGPS…GSSP), and 1061–1075 (PSSS…PHPS). Over residues 1093-1102 (PPAPHMPHPS) the composition is skewed to pro residues. A compositionally biased stretch (polar residues) spans 1125 to 1149 (GPNTLYMQSHQDSPFTAMSPANNQW). Residues 1153–1163 (PSMPRPSPRPG) are compositionally biased toward pro residues. Over residues 1515-1527 (MPMQQLQPQVGPQ) the composition is skewed to low complexity.

This sequence belongs to the Mediator complex subunit 14 family. In terms of assembly, component of the Mediator complex.

The protein localises to the nucleus. Its function is as follows. Component of the Mediator complex, a coactivator involved in the regulated transcription of nearly all RNA polymerase II-dependent genes. Mediator functions as a bridge to convey information from gene-specific regulatory proteins to the basal RNA polymerase II transcription machinery. Mediator is recruited to promoters by direct interactions with regulatory proteins and serves as a scaffold for the assembly of a functional preinitiation complex with RNA polymerase II and the general transcription factors. This is Mediator of RNA polymerase II transcription subunit 14 (MED14) from Drosophila pseudoobscura pseudoobscura (Fruit fly).